A 188-amino-acid chain; its full sequence is F-box only protein 36 (188 aa).

The region spanning Phe91–Ile137 is the F-box domain.

As to quaternary structure, directly interacts with SKP1 and CUL1.

In terms of biological role, substrate-recognition component of the SCF (SKP1-CUL1-F-box protein)-type E3 ubiquitin ligase complex. The chain is F-box only protein 36 (Fbxo36) from Mus musculus (Mouse).